The chain runs to 138 residues: Basic leucine zipper 8 (138 aa).

Positions 30 to 67 (NLPATSDDSSRTAEDNERKRRRKVSNRESARRSRMRKQ) are disordered. Positions 37–47 (DSSRTAEDNER) are enriched in basic and acidic residues. One can recognise a bZIP domain in the interval 45–108 (NERKRRRKVS…EKVIEENMKL (64 aa)). A basic motif region spans residues 47–68 (RKRRRKVSNRESARRSRMRKQR). Residues 48–55 (KRRRKVSN) carry the Nuclear localization signal motif. The tract at residues 73–87 (LWSMLVQLINKNKSL) is leucine-zipper.

It belongs to the bZIP family. In terms of assembly, homodimer.

It is found in the nucleus. In Arabidopsis thaliana (Mouse-ear cress), this protein is Basic leucine zipper 8.